The sequence spans 231 residues: Ureidoacrylate amidohydrolase RutB (231 aa).

Catalysis depends on Asp-25, which acts as the Proton acceptor. Lys-134 is a catalytic residue. Cys-167 functions as the Nucleophile in the catalytic mechanism.

The protein belongs to the isochorismatase family. RutB subfamily.

The enzyme catalyses (Z)-3-ureidoacrylate + H2O + H(+) = (Z)-3-aminoacrylate + NH4(+) + CO2. The catalysed reaction is (Z)-3-ureidoacrylate + H2O = (Z)-3-aminoacrylate + carbamate + H(+). It carries out the reaction (Z)-2-methylureidoacrylate + H2O + H(+) = (Z)-2-methylaminoacrylate + NH4(+) + CO2. In terms of biological role, hydrolyzes ureidoacrylate to form aminoacrylate and carbamate. The carbamate hydrolyzes spontaneously, thereby releasing one of the nitrogen atoms of the pyrimidine ring as ammonia and one of its carbon atoms as CO2. This is Ureidoacrylate amidohydrolase RutB from Escherichia coli (strain SMS-3-5 / SECEC).